The chain runs to 228 residues: Probable septum site-determining protein MinC (228 aa).

Belongs to the MinC family. As to quaternary structure, interacts with MinD and FtsZ.

Cell division inhibitor that blocks the formation of polar Z ring septums. Rapidly oscillates between the poles of the cell to destabilize FtsZ filaments that have formed before they mature into polar Z rings. Prevents FtsZ polymerization. In Bacillus cereus (strain B4264), this protein is Probable septum site-determining protein MinC.